The chain runs to 302 residues: Glutaminase (302 aa).

Residues Ser61, Asn111, Glu155, Asn162, Tyr186, Tyr238, and Val256 each contribute to the substrate site.

Belongs to the glutaminase family. In terms of assembly, homotetramer.

It carries out the reaction L-glutamine + H2O = L-glutamate + NH4(+). The polypeptide is Glutaminase (Pseudomonas fluorescens (strain Pf0-1)).